Here is a 311-residue protein sequence, read N- to C-terminus: Formimidoylglutamase (311 aa).

Residues His127, Asp152, His154, Asp156, Cys236, and Asp238 each coordinate Mn(2+).

This sequence belongs to the arginase family. Mn(2+) is required as a cofactor.

It carries out the reaction N-formimidoyl-L-glutamate + H2O = formamide + L-glutamate. Its pathway is amino-acid degradation; L-histidine degradation into L-glutamate; L-glutamate from N-formimidoyl-L-glutamate (hydrolase route): step 1/1. Its function is as follows. Catalyzes the conversion of N-formimidoyl-L-glutamate to L-glutamate and formamide. The sequence is that of Formimidoylglutamase from Macrococcus caseolyticus (strain JCSC5402) (Macrococcoides caseolyticum).